The following is a 297-amino-acid chain: Transcription factor MYB1R1 (297 aa).

Residues 44 to 96 (DLSQYEHPNANNNNNGGDNNESSKVAQDEGYASADDAVQHQSNSGRERKRGVP) form a disordered region. Over residues 52 to 63 (NANNNNNGGDNN) the composition is skewed to low complexity. Residues 89-145 (RERKRGVPWTEEEHKLFLLGLQKVGKGDWRGISRNFVKTRTPTQVASHAQKYFLRRS) enclose the HTH myb-type domain. A DNA-binding region (H-T-H motif) is located at residues 117 to 141 (WRGISRNFVKTRTPTQVASHAQKYF).

It is found in the nucleus. The protein resides in the cytoplasm. Its subcellular location is the cytosol. Its function is as follows. Binds selectively to the DNA sequence 5'-[GA]GATAA-3' and may act as a transcription factor involved in the regulation of drought-responsive genes. Enhances stomatal closure in response to abscisic acid (ABA). Confers drought and salt tolerance. This Solanum tuberosum (Potato) protein is Transcription factor MYB1R1.